The sequence spans 122 residues: MIQSQTYLNVADNSGARKIMCIRVLGGSQRQYATIGDVIIAVVKDSVPNMALKRSEVVRAVVVRTRKGLRRDNGMTIRFDDNAAVVINKEGNPRGTRVFGPVARELRDRNFTKIVSLAPEVL.

This sequence belongs to the universal ribosomal protein uL14 family. In terms of assembly, part of the 50S ribosomal subunit.

The protein localises to the plastid. The protein resides in the chloroplast. In terms of biological role, binds to 23S rRNA. The sequence is that of Large ribosomal subunit protein uL14c from Chlorokybus atmophyticus (Soil alga).